The primary structure comprises 34 residues: Mu-theraphotoxin-Df1a (34 aa).

3 disulfides stabilise this stretch: Cys-2–Cys-16, Cys-9–Cys-21, and Cys-15–Cys-28. Phe-34 is subject to Phenylalanine amide.

This sequence belongs to the neurotoxin 10 (Hwtx-1) family. 54 (ProTx-1) subfamily. In terms of processing, C-terminal amidation is important for the high potency of the toxin. In terms of tissue distribution, expressed by the venom gland.

It localises to the secreted. Its function is as follows. Inhibits sodium channel Nav1.7/SCN9A with high potency (IC(50)=117 nM) and Nav1.2/SCN2A, Nav1.3/SCN3A, Nav1.6/SCN8A and Nav1.5/SCN5 with weaker potency. Also inhibits voltage-gated calcium channel Cav3.1/CACNA1G, Cav3.2/CACNA1H and Cav3.3/CACNA1I. The chain is Mu-theraphotoxin-Df1a from Davus fasciatus (Costa Rican tiger rump).